The following is a 226-amino-acid chain: 2,3-bisphosphoglycerate-dependent phosphoglycerate mutase (226 aa).

Substrate contacts are provided by residues 8 to 15, 21 to 22, arginine 58, 109 to 112, lysine 120, 136 to 137, and 180 to 181; these read RHGQSVWN, TG, ERMY, RR, and GN. Histidine 9 functions as the Tele-phosphohistidine intermediate in the catalytic mechanism. Glutamate 109 (proton donor/acceptor) is an active-site residue.

It belongs to the phosphoglycerate mutase family. BPG-dependent PGAM subfamily.

It carries out the reaction (2R)-2-phosphoglycerate = (2R)-3-phosphoglycerate. It functions in the pathway carbohydrate degradation; glycolysis; pyruvate from D-glyceraldehyde 3-phosphate: step 3/5. Functionally, catalyzes the interconversion of 2-phosphoglycerate and 3-phosphoglycerate. This chain is 2,3-bisphosphoglycerate-dependent phosphoglycerate mutase, found in Chlamydia trachomatis serovar L2b (strain UCH-1/proctitis).